The chain runs to 628 residues: DNA primase (628 aa).

The CHC2-type zinc-finger motif lies at cysteine 40–cysteine 64. The region spanning asparagine 269–lysine 351 is the Toprim domain. Mg(2+)-binding residues include glutamate 275, aspartate 319, and aspartate 321.

This sequence belongs to the DnaG primase family. In terms of assembly, monomer. Interacts with DnaB. Zn(2+) serves as cofactor. It depends on Mg(2+) as a cofactor.

It catalyses the reaction ssDNA + n NTP = ssDNA/pppN(pN)n-1 hybrid + (n-1) diphosphate.. Its function is as follows. RNA polymerase that catalyzes the synthesis of short RNA molecules used as primers for DNA polymerase during DNA replication. This chain is DNA primase, found in Enterococcus faecalis (strain ATCC 700802 / V583).